Here is a 103-residue protein sequence, read N- to C-terminus: Phosphoribosyl-ATP pyrophosphatase (103 aa).

The protein belongs to the PRA-PH family.

It localises to the cytoplasm. The catalysed reaction is 1-(5-phospho-beta-D-ribosyl)-ATP + H2O = 1-(5-phospho-beta-D-ribosyl)-5'-AMP + diphosphate + H(+). It participates in amino-acid biosynthesis; L-histidine biosynthesis; L-histidine from 5-phospho-alpha-D-ribose 1-diphosphate: step 2/9. This Cereibacter sphaeroides (strain ATCC 17029 / ATH 2.4.9) (Rhodobacter sphaeroides) protein is Phosphoribosyl-ATP pyrophosphatase.